The following is a 698-amino-acid chain: Polyribonucleotide nucleotidyltransferase (698 aa).

Mg(2+)-binding residues include aspartate 485 and aspartate 491. The KH domain maps to 552–611 (PRIHTIKINTDKIRDVIGKGGAVIRSLCEETGTTIEIEDDGTVKIAATSGEQADDAINRI). In terms of domain architecture, S1 motif spans 621 to 689 (GTIYTGKVVR…RQGRVRLSIK (69 aa)).

Belongs to the polyribonucleotide nucleotidyltransferase family. In terms of assembly, component of the RNA degradosome, which is a multiprotein complex involved in RNA processing and mRNA degradation. The cofactor is Mg(2+).

Its subcellular location is the cytoplasm. It catalyses the reaction RNA(n+1) + phosphate = RNA(n) + a ribonucleoside 5'-diphosphate. In terms of biological role, involved in mRNA degradation. Catalyzes the phosphorolysis of single-stranded polyribonucleotides processively in the 3'- to 5'-direction. In Psychromonas ingrahamii (strain DSM 17664 / CCUG 51855 / 37), this protein is Polyribonucleotide nucleotidyltransferase.